The following is a 445-amino-acid chain: Xylose isomerase (445 aa).

Active-site residues include histidine 107 and aspartate 110. The Mg(2+) site is built by glutamate 238, glutamate 274, histidine 277, aspartate 302, aspartate 313, aspartate 315, and aspartate 345.

It belongs to the xylose isomerase family. As to quaternary structure, homotetramer. Mg(2+) serves as cofactor.

It is found in the cytoplasm. It catalyses the reaction alpha-D-xylose = alpha-D-xylulofuranose. This Bacillus subtilis (strain 168) protein is Xylose isomerase (xylA).